A 1463-amino-acid chain; its full sequence is Nitric oxide synthase 1 (1463 aa).

The segment at 1–200 (MESHMFSVQQ…LQGSGENNKL (200 aa)) is interaction with NOSIP. The 83-residue stretch at 17–99 (SVRLFKRKVG…ETHVVLILRG (83 aa)) folds into the PDZ domain. Disordered regions lie at residues 110–194 (TFTG…LQGS), 215–250 (GKAI…LPLG), and 268–298 (VVLN…SKCP). The segment at 158–240 (PDPGQEASSL…VEVQVDRDPD (83 aa)) is DYNLL1/PIN/nNOS-inhibiting protein-binding. A compositionally biased stretch (basic and acidic residues) spans 226–243 (TETKDVEVQVDRDPDSKS). Positions 280–294 (PSASGKQSPTKNGSP) are enriched in polar residues. Residue Ser334 participates in (6R)-L-erythro-5,6,7,8-tetrahydrobiopterin binding. Cys415 lines the heme b pocket. L-arginine contacts are provided by Gln478, Trp587, Tyr588, and Glu592. The (6R)-L-erythro-5,6,7,8-tetrahydrobiopterin site is built by Val677, Trp678, and Phe691. Residue Tyr706 coordinates heme b. Positions 725 to 745 (KRRAIGFKKLAEAVKFSAKLM) are calmodulin-binding. The Flavodoxin-like domain maps to 755–969 (ATILYATETG…AFRTWAKKVF (215 aa)). Thr761, Glu762, Thr763, Lys765, Ser766, Ser807, Thr808, and Gly812 together coordinate FMN. Ser881, Ser891, and Ser892 each carry phosphoserine. Positions 920, 925, 927, 953, and 957 each coordinate FMN. The FAD-binding FR-type domain maps to 1024–1271 (KRVSAARLLS…VRGAPSFHLP (248 aa)). Residue Arg1044 coordinates NADP(+). The FAD site is built by His1066, Arg1207, Tyr1208, Tyr1209, Ser1210, Thr1225, and Ala1227. Ser1230 provides a ligand contact to NADP(+). Residues Tyr1231, Val1244, Cys1245, and Ser1246 each coordinate FAD. Residues Thr1285, Arg1318, Ser1347, Arg1348, Lys1354, Tyr1356, Gln1358, Asp1391, Thr1432, and Arg1434 each contribute to the NADP(+) site.

This sequence belongs to the NOS family. Homodimer. Interacts with DLG4; the interaction possibly being prevented by the association between NOS1 and CAPON. Forms a ternary complex with CAPON and RASD1. Forms a ternary complex with CAPON and SYN1. Interacts with ZDHHC23. Interacts with NOSIP; which may impair its synaptic location. Interacts with HTR4. Interacts with SLC6A4. Interacts with VAC14. Interacts (via N-terminal domain) with DLG4 (via N-terminal tandem pair of PDZ domains). Interacts with SLC6A4. Forms a complex with ASL, ASS1 and SLC7A1; the complex regulates cell-autonomous L-arginine synthesis and citrulline recycling while channeling extracellular L-arginine to nitric oxide synthesis pathway. Interacts with DMD; localizes NOS1 to sarcolemma in muscle cells. Interacts with DYNLL1; inhibits the nitric oxide synthase activity. Heme b is required as a cofactor. FAD serves as cofactor. Requires FMN as cofactor. The cofactor is (6R)-L-erythro-5,6,7,8-tetrahydrobiopterin. In terms of processing, ubiquitinated; mediated by STUB1/CHIP in the presence of Hsp70 and Hsp40 (in vitro).

It is found in the cell membrane. The protein localises to the sarcolemma. The protein resides in the cell projection. It localises to the dendritic spine. The enzyme catalyses 2 L-arginine + 3 NADPH + 4 O2 + H(+) = 2 L-citrulline + 2 nitric oxide + 3 NADP(+) + 4 H2O. Stimulated by calcium/calmodulin. Inhibited by DYNLL1 that prevents the dimerization of the protein. Inhibited by NOSIP. In terms of biological role, produces nitric oxide (NO) which is a messenger molecule with diverse functions throughout the body. In the brain and peripheral nervous system, NO displays many properties of a neurotransmitter. Probably has nitrosylase activity and mediates cysteine S-nitrosylation of cytoplasmic target proteins such SRR. The chain is Nitric oxide synthase 1 (NOS1) from Ovis aries (Sheep).